The following is a 694-amino-acid chain: Methionine--tRNA ligase (694 aa).

The short motif at 12 to 22 is the 'HIGH' region element; the sequence is PYANGPLHLGH. Zn(2+)-binding residues include Cys143, Cys146, Cys156, and Cys159. Positions 330–334 match the 'KMSKS' region motif; sequence KMSKS. ATP is bound at residue Lys333. The span at 550–575 shows a compositional bias: low complexity; the sequence is LAAPAAPATTSKAAPAKPDTKPAAAA. The tract at residues 550 to 580 is disordered; sequence LAAPAAPATTSKAAPAKPDTKPAAAANPQSP. The 104-residue stretch at 591-694 folds into the tRNA-binding domain; it reads DFAKLDLRIG…SGAQPGMPVR (104 aa).

This sequence belongs to the class-I aminoacyl-tRNA synthetase family. MetG type 1 subfamily. In terms of assembly, homodimer. Zn(2+) serves as cofactor.

Its subcellular location is the cytoplasm. The enzyme catalyses tRNA(Met) + L-methionine + ATP = L-methionyl-tRNA(Met) + AMP + diphosphate. In terms of biological role, is required not only for elongation of protein synthesis but also for the initiation of all mRNA translation through initiator tRNA(fMet) aminoacylation. The protein is Methionine--tRNA ligase of Xanthomonas oryzae pv. oryzae (strain MAFF 311018).